The following is a 248-amino-acid chain: Ubiquinone biosynthesis O-methyltransferase (248 aa).

Residues arginine 41, glycine 72, aspartate 93, and methionine 136 each coordinate S-adenosyl-L-methionine.

The protein belongs to the methyltransferase superfamily. UbiG/COQ3 family.

The catalysed reaction is a 3-demethylubiquinol + S-adenosyl-L-methionine = a ubiquinol + S-adenosyl-L-homocysteine + H(+). It catalyses the reaction a 3-(all-trans-polyprenyl)benzene-1,2-diol + S-adenosyl-L-methionine = a 2-methoxy-6-(all-trans-polyprenyl)phenol + S-adenosyl-L-homocysteine + H(+). It participates in cofactor biosynthesis; ubiquinone biosynthesis. Functionally, O-methyltransferase that catalyzes the 2 O-methylation steps in the ubiquinone biosynthetic pathway. The sequence is that of Ubiquinone biosynthesis O-methyltransferase from Brucella melitensis biotype 2 (strain ATCC 23457).